We begin with the raw amino-acid sequence, 196 residues long: Cell division protein SepF (196 aa).

Residues 15-80 (VEDDEEFNEP…PKRSASTFSK (66 aa)) form a disordered region. Positions 57–72 (PAQTTPKPQTQTAAPK) are enriched in low complexity.

It belongs to the SepF family. Homodimer. Interacts with FtsZ.

It localises to the cytoplasm. Cell division protein that is part of the divisome complex and is recruited early to the Z-ring. Probably stimulates Z-ring formation, perhaps through the cross-linking of FtsZ protofilaments. Its function overlaps with FtsA. The protein is Cell division protein SepF of Lactococcus lactis subsp. cremoris (strain MG1363).